The primary structure comprises 137 residues: Large ribosomal subunit protein bL17 (137 aa).

This sequence belongs to the bacterial ribosomal protein bL17 family. Part of the 50S ribosomal subunit. Contacts protein L32.

The polypeptide is Large ribosomal subunit protein bL17 (Bradyrhizobium sp. (strain BTAi1 / ATCC BAA-1182)).